Here is a 448-residue protein sequence, read N- to C-terminus: Glucan 1,3-beta-glucosidase I/II (448 aa).

The first 19 residues, 1–19, serve as a signal peptide directing secretion; sequence MLSLKTLLCTLLTVSSVLA. A propeptide spanning residues 20-40 is cleaved from the precursor; that stretch reads TPVPARDPSSIQFVHEENKKR. N-linked (GlcNAc...) asparagine glycosylation is present at N165. E232 functions as the Proton donor in the catalytic mechanism. The N-linked (GlcNAc...) asparagine glycan is linked to N325. The active-site Nucleophile is E334.

It belongs to the glycosyl hydrolase 5 (cellulase A) family.

It is found in the secreted. The protein localises to the cell wall. The enzyme catalyses Successive hydrolysis of beta-D-glucose units from the non-reducing ends of (1-&gt;3)-beta-D-glucans, releasing alpha-glucose.. Glucanases possibly play a role in cell expansion during growth, in cell-cell fusion during mating, and in spore release during sporulation. This enzyme hydrolyzes both 1,3-beta- and 1,6-beta-linkages and even has beta-glucosidase activity. It could also function biosynthetically as a transglycosylase. This is Glucan 1,3-beta-glucosidase I/II (EXG1) from Saccharomyces cerevisiae (strain ATCC 204508 / S288c) (Baker's yeast).